A 573-amino-acid chain; its full sequence is MAKVELKAPDGPPSDVERIKQESRYLRGTLAETMEDPLSAGIPDDDNRLMKFHGSYLQDDRDVRTERQKQKLEPTYQFMIRVRTPGGVATPEQWLVMDELARKYANGTLKLTTRQAFQLHGVLKWNVKKTMQAINGALMTTLAACGDVNRNVMCNPNPYQSEVHAEVYEWAKLISDHLLPRTRAYYEIWLDDEKVAGTPPVDGEEEPIYGPTYLPRKFKIGIAVPPSNDVDVFSQDIGFIAIVEDGKLAGFNVAIGGGMGMTHGDKTTYPQLAKVIGFCKPDQVVEVAEKIMTVQRDYGNRSSRKHARFKYTIDRLGLEAVKEEIERRLGWRLGEARPYHFEHSGDRYGWVEGVNGTWHFTLFVEGGRVKDYDDYKLMTGLREIAKVHTGDFRLTPNQNLIIANVTSEKKPEIEALIAKYGLTDGRRYTALRRNALACVALPTCGLAMAEAERYLPKLLDKIEEIIDENGLRDEEITIRMTGCPNGCARHVLAEIAFVGKAVGKYNMYLGAAFNGTRLGKLYRENIGEEEILRELRMLLSRYAKERLDGEHFGDFVIRAGIVKEVTDGTNFHD.

Residues 1 to 20 (MAKVELKAPDGPPSDVERIK) form a disordered region. Residues Cys438, Cys444, Cys483, and Cys487 each contribute to the [4Fe-4S] cluster site. A siroheme-binding site is contributed by Cys487.

This sequence belongs to the nitrite and sulfite reductase 4Fe-4S domain family. In terms of assembly, alpha(8)-beta(8). The alpha component is a flavoprotein, the beta component is a hemoprotein. Siroheme serves as cofactor. Requires [4Fe-4S] cluster as cofactor.

It catalyses the reaction hydrogen sulfide + 3 NADP(+) + 3 H2O = sulfite + 3 NADPH + 4 H(+). Its pathway is sulfur metabolism; hydrogen sulfide biosynthesis; hydrogen sulfide from sulfite (NADPH route): step 1/1. Functionally, component of the sulfite reductase complex that catalyzes the 6-electron reduction of sulfite to sulfide. This is one of several activities required for the biosynthesis of L-cysteine from sulfate. The sequence is that of Sulfite reductase [NADPH] hemoprotein beta-component from Geobacillus kaustophilus (strain HTA426).